Consider the following 78-residue polypeptide: Probable [Fe-S]-dependent transcriptional repressor (78 aa).

The iron-sulfur cluster site is built by Cys56, Cys61, Cys64, and Cys70.

The protein belongs to the FeoC family.

In terms of biological role, may function as a transcriptional regulator that controls feoABC expression. In Escherichia coli (strain UTI89 / UPEC), this protein is Probable [Fe-S]-dependent transcriptional repressor.